A 501-amino-acid polypeptide reads, in one-letter code: DDB1- and CUL4-associated factor 12-like protein 1 (501 aa).

Residues 1–37 are compositionally biased toward polar residues; sequence MRQADSQTQPSPAEQETPQPAGPSNRSPPTMGPQQTG. The segment at 1–67 is disordered; that stretch reads MRQADSQTQP…PAAPMATAGE (67 aa). WD repeat units follow at residues 185–225, 230–268, 298–337, and 384–423; these read PPSC…PVCL, GHRDWIFAIAWMSDTVAVSGSRDGTVALWKVDPDMFNGS, PGNRKVRALAFSNKNQELGAVSLDGYFHLWKARSSLSRLL, and SREGGTGVRSLSVHQHIVTVGTGHGSLLFYDIRAQKFLEE.

This sequence belongs to the WD repeat DCAF12 family.

In Mus musculus (Mouse), this protein is DDB1- and CUL4-associated factor 12-like protein 1 (Dcaf12l1).